The sequence spans 296 residues: Haloalkane dehalogenase (296 aa).

The AB hydrolase-1 domain maps to 31–155 (PILFQHGNPT…QDRDLFQAFR (125 aa)). N38 provides a ligand contact to chloride. Catalysis depends on D108, which acts as the Nucleophile. W109 contributes to the chloride binding site. The active-site Proton donor is E132. H272 acts as the Proton acceptor in catalysis.

The protein belongs to the haloalkane dehalogenase family. Type 2 subfamily. In terms of assembly, monomer.

It localises to the periplasm. The enzyme catalyses 1-haloalkane + H2O = a halide anion + a primary alcohol + H(+). It catalyses the reaction (3R,6R)-1,3,4,6-tetrachlorocyclohexa-1,4-diene + 2 H2O = 2,5-dichlorocyclohexa-2,5-dien-1,4-diol + 2 chloride + 2 H(+). It participates in xenobiotic degradation; gamma-hexachlorocyclohexane degradation. Its activity is regulated as follows. Competitively inhibited by the key pollutants 1,2-dichloroethane (1,2-DCE) and 1,2-dichloropropane (1,2-DCP). In terms of biological role, catalyzes hydrolytic cleavage of carbon-halogen bonds in halogenated aliphatic compounds, leading to the formation of the corresponding primary alcohols, halide ions and protons. Has a broad substrate specificity since not only monochloroalkanes (C3 to C10) but also dichloroalkanes (&gt; C3), bromoalkanes, and chlorinated aliphatic alcohols are good substrates. Shows almost no activity with 1,2-dichloroethane, but very high activity with the brominated analog. Is involved in the degradation of the important environmental pollutant gamma-hexachlorocyclohexane (gamma-HCH or lindane) as it also catalyzes conversion of 1,3,4,6-tetrachloro-1,4-cyclohexadiene (1,4-TCDN) to 2,5-dichloro-2,5-cyclohexadiene-1,4-diol (2,5-DDOL) via the intermediate 2,4,5-trichloro-2,5-cyclohexadiene-1-ol (2,4,5-DNOL). This degradation pathway allows S.japonicum UT26 to grow on gamma-HCH as the sole source of carbon and energy. In Sphingobium indicum (strain DSM 16413 / CCM 7287 / MTCC 6362 / UT26 / NBRC 101211 / UT26S) (Sphingobium japonicum), this protein is Haloalkane dehalogenase.